A 67-amino-acid chain; its full sequence is Large ribosomal subunit protein bL35 (67 aa).

Residues 1–16 (MPKMKTKSSAKKRFRV) are compositionally biased toward basic residues. Residues 1-23 (MPKMKTKSSAKKRFRVRPGGTVK) are disordered.

The protein belongs to the bacterial ribosomal protein bL35 family.

The protein is Large ribosomal subunit protein bL35 of Variovorax paradoxus (strain S110).